The following is an 888-amino-acid chain: Collagen alpha chain (888 aa).

A disordered region spans residues 1-627 (APGPDGLTGT…GPPGQPGMSE (627 aa)). The Collagen-like 1 domain occupies 3-60 (GPDGLTGTKGSMGEPGTDGEPGSPGPQGAKGETGLAGRRGLTGIPGKQGRQGERGEPG). Composition is skewed to low complexity over residues 59–73 (PGTA…QPGT) and 148–164 (TPGL…MGPI). Positions 179 to 190 (RGYDGKDGEPGR) are enriched in basic and acidic residues. Positions 194-203 (PGPIGQPGIP) are enriched in low complexity. Positions 311-320 (SGPPGPPGPS) are enriched in pro residues. Over residues 422-440 (SGSRGAQGPPGAPGSSGQN) the composition is skewed to low complexity. The span at 441-450 (GVDGGTGENG) shows a compositional bias: gly residues. Composition is skewed to low complexity over residues 460–475 (ESGA…SAGP) and 508–518 (EPGPQGDQGPK). Residues 513–571 (GDQGPKGQKGEVGPVGEKGDKGWTGTPGDPGPQGDRGEPGPPGRDGVDGPPGPRGAPGE) form the Collagen-like 2 domain. The span at 610–622 (PPGPPGPPGPPGQ) shows a compositional bias: pro residues. The Fibrillar collagen NC1 domain occupies 661-884 (ENVLKDLDEK…KLEIGPACFH (224 aa)). 2 disulfide bridges follow: cysteine 731–cysteine 882 and cysteine 793–cysteine 833.

Belongs to the fibrillar collagen family. In terms of tissue distribution, component of the acid-insoluble organic matrix of the aragonitic skeleton (at protein level).

It localises to the secreted. The chain is Collagen alpha chain from Acropora millepora (Staghorn coral).